A 126-amino-acid polypeptide reads, in one-letter code: Large ribosomal subunit protein bL17 (126 aa).

The protein belongs to the bacterial ribosomal protein bL17 family. Part of the 50S ribosomal subunit. Contacts protein L32.

This Vibrio parahaemolyticus serotype O3:K6 (strain RIMD 2210633) protein is Large ribosomal subunit protein bL17.